A 504-amino-acid polypeptide reads, in one-letter code: MNSQNYSINNFKQIFDNDILSDVKLILKDNNKELSLNLHKIVLFTHCKFFQAMFVGFEESTKKEVVLNVQNVDICRDIIKEFYGFKSPSVTRYQNWKCRLEYHICCNYFLIDNKFPDIVNINKSCFDDLLNLIDKINYNDVTIRLLAKNLPSNYDLSKLPLELVKKMRNKSCYSGFVFFGNEKHLCIADENFDNIRKFQYGIDLGNDYCYMPNSNKIVRVVSNYVANFSLQSESFECYKIRTKKFNKKFDKKYKIKSSDSFEKPIYNSLRNEIIIIHRKKKYSIICVLDAKKFDLVRTICKFKKSKEKLCHMALSYDCNKLVFVLTIINEVNNKNTEIYVKYLDTGVQERIYKTNRIVNDLKFLNNDIIVFYNNKNNSGHLKTYDISKHKKLPGLTTFPITHISICQEKYVIIVTNMYTHIMVSKKFSGIKYFENCKVVCSPSGKIVSYGNSKNFLTSIDDYENYKTLDSLEINSILPVNVKYDIHDKLNDYIDSLKKIEEENI.

The BTB domain maps to 21–91 (SDVKLILKDN…FYGFKSPSVT (71 aa)).

The protein belongs to the mimivirus BTB/WD family.

This Acanthamoeba polyphaga (Amoeba) protein is Putative BTB/POZ domain-containing protein R842.